The chain runs to 446 residues: Putative diacyglycerol O-acyltransferase MT3481 (446 aa).

The active-site Proton acceptor is His-129. The interval 425–446 (SRALPSAARRGRPSVPTARARH) is disordered.

This sequence belongs to the long-chain O-acyltransferase family.

It carries out the reaction an acyl-CoA + a 1,2-diacyl-sn-glycerol = a triacyl-sn-glycerol + CoA. Its pathway is glycerolipid metabolism; triacylglycerol biosynthesis. In Mycobacterium tuberculosis (strain CDC 1551 / Oshkosh), this protein is Putative diacyglycerol O-acyltransferase MT3481.